We begin with the raw amino-acid sequence, 153 residues long: Neuromedin-S (153 aa).

An N-terminal signal peptide occupies residues Met1–Gly26. 3 propeptides span residues Ala27–Arg69, Phe70–Arg105, and Met106–Arg108. Residue Asn144 is modified to Asparagine amide. A propeptide spanning residues Tyr147–Gln153 is cleaved from the precursor.

This sequence belongs to the NmU family.

The protein localises to the secreted. Its function is as follows. Implicated in the regulation of circadian rhythms through autocrine and/or paracrine actions. This is Neuromedin-S (Nms) from Mus musculus (Mouse).